Consider the following 68-residue polypeptide: MAVPKKRTSASKTRMRRSHHALAKVNVITDAKTGEYRLSHHVCMTHGTYNGKKVITDNVNTNDNNNNP.

It belongs to the bacterial ribosomal protein bL32 family.

This is Large ribosomal subunit protein bL32 from Orientia tsutsugamushi (strain Boryong) (Rickettsia tsutsugamushi).